Here is a 277-residue protein sequence, read N- to C-terminus: Shikimate dehydrogenase (NADP(+)) (277 aa).

Shikimate-binding positions include 15–17 (SLS) and Thr-62. Catalysis depends on Lys-66, which acts as the Proton acceptor. Shikimate is bound by residues Asn-87 and Asp-102. NADP(+)-binding positions include 127 to 131 (GAGGA), 151 to 156 (NRTRDK), and Ile-219. Tyr-221 is a shikimate binding site. Residue Gly-242 coordinates NADP(+).

The protein belongs to the shikimate dehydrogenase family. As to quaternary structure, homodimer.

The enzyme catalyses shikimate + NADP(+) = 3-dehydroshikimate + NADPH + H(+). Its pathway is metabolic intermediate biosynthesis; chorismate biosynthesis; chorismate from D-erythrose 4-phosphate and phosphoenolpyruvate: step 4/7. Its function is as follows. Involved in the biosynthesis of the chorismate, which leads to the biosynthesis of aromatic amino acids. Catalyzes the reversible NADPH linked reduction of 3-dehydroshikimate (DHSA) to yield shikimate (SA). This Bacillus mycoides (strain KBAB4) (Bacillus weihenstephanensis) protein is Shikimate dehydrogenase (NADP(+)).